The sequence spans 561 residues: Dihydroxy-acid dehydratase (561 aa).

C50 is a binding site for [2Fe-2S] cluster. A Mg(2+)-binding site is contributed by D82. Residue C123 participates in [2Fe-2S] cluster binding. D124 and K125 together coordinate Mg(2+). K125 bears the N6-carboxylysine mark. Position 195 (C195) interacts with [2Fe-2S] cluster. E447 provides a ligand contact to Mg(2+). The active-site Proton acceptor is the S473.

Belongs to the IlvD/Edd family. As to quaternary structure, homodimer. It depends on [2Fe-2S] cluster as a cofactor. Requires Mg(2+) as cofactor.

The catalysed reaction is (2R)-2,3-dihydroxy-3-methylbutanoate = 3-methyl-2-oxobutanoate + H2O. The enzyme catalyses (2R,3R)-2,3-dihydroxy-3-methylpentanoate = (S)-3-methyl-2-oxopentanoate + H2O. Its pathway is amino-acid biosynthesis; L-isoleucine biosynthesis; L-isoleucine from 2-oxobutanoate: step 3/4. The protein operates within amino-acid biosynthesis; L-valine biosynthesis; L-valine from pyruvate: step 3/4. Its function is as follows. Functions in the biosynthesis of branched-chain amino acids. Catalyzes the dehydration of (2R,3R)-2,3-dihydroxy-3-methylpentanoate (2,3-dihydroxy-3-methylvalerate) into 2-oxo-3-methylpentanoate (2-oxo-3-methylvalerate) and of (2R)-2,3-dihydroxy-3-methylbutanoate (2,3-dihydroxyisovalerate) into 2-oxo-3-methylbutanoate (2-oxoisovalerate), the penultimate precursor to L-isoleucine and L-valine, respectively. The polypeptide is Dihydroxy-acid dehydratase (Trichodesmium erythraeum (strain IMS101)).